Reading from the N-terminus, the 173-residue chain is Alpha-crystallin A chain (173 aa).

N-acetylmethionine is present on Met1. The tract at residues 1–63 is required for complex formation with BFSP1 and BFSP2; that stretch reads MDIAIQHPWF…RTVLDSGISE (63 aa). A Deamidated glutamine; partial modification is found at Gln6. The residue at position 45 (Ser45) is a Phosphoserine. Gln50 carries the post-translational modification Deamidated glutamine; partial. One can recognise a sHSP domain in the interval 52-162; sequence LFRTVLDSGI…GHSERAIPVS (111 aa). Lys70 carries the post-translational modification N6-acetyllysine. Position 90 is a deamidated glutamine; partial (Gln90). The residue at position 99 (Lys99) is an N6-acetyllysine. His100 is a binding site for Zn(2+). A Deamidated asparagine; partial modification is found at Asn101. Zn(2+) contacts are provided by Glu102 and His107. Ser122 bears the Phosphoserine mark. The residue at position 123 (Asn123) is a Deamidated asparagine; partial. Positions 144–173 are disordered; the sequence is PKVPSGMDAGHSERAIPVSREEKPSSAPSS. A compositionally biased stretch (basic and acidic residues) spans 153-167; sequence GHSERAIPVSREEKP. His154 contacts Zn(2+). Ser162 carries an O-linked (GlcNAc) serine glycan.

This sequence belongs to the small heat shock protein (HSP20) family. Heteromer composed of three CRYAA and one CRYAB subunits. Inter-subunit bridging via zinc ions enhances stability, which is crucial as there is no protein turn over in the lens. Can also form homodimers and homotetramers (dimers of dimers) which serve as the building blocks of homooligomers. Within homooligomers, the zinc-binding motif is created from residues of 3 different molecules. His-100 and Glu-102 from one molecule are ligands of the zinc ion, and His-107 and His-154 residues from additional molecules complete the site with tetrahedral coordination geometry. Part of a complex required for lens intermediate filament formation composed of BFSP1, BFSP2 and CRYAA. Post-translationally, acetylation at Lys-70 may increase chaperone activity. Undergoes age-dependent proteolytical cleavage at the C-terminus.

The protein localises to the cytoplasm. It localises to the nucleus. Its function is as follows. Contributes to the transparency and refractive index of the lens. Acts as a chaperone, preventing aggregation of various proteins under a wide range of stress conditions. Required for the correct formation of lens intermediate filaments as part of a complex composed of BFSP1, BFSP2 and CRYAA. The polypeptide is Alpha-crystallin A chain (CRYAA) (Balaenoptera acutorostrata (Common minke whale)).